The sequence spans 1374 residues: F-actin-uncapping protein LRRC16A (1374 aa).

Met1 carries the N-acetylmethionine modification. Phosphoserine is present on Ser122. LRR repeat units lie at residues 245–269 (SNRLEELVLENAGLRIDFAQKLAGA), 275–298 (NSGLHTINLAGNSLEDRGVSSLSI), 304–327 (PKGLKHLNLSKTSLSPKGVNSLCQ), 336–363 (ASTLTHLDLSGNALRGDDLSHMYNFLAQ), 391–418 (LQCLAVLNLSRSVFSHRKGKEVPPSFKQ), 423–447 (SLALIQINLSGTKLSPEPLKALLLG), 485–510 (IHNITSLDISDNGLESDLSTLIVWLS), 547–570 (DSPLQSLSLADSKLKAEVTIIINA), 574–597 (NTSLTKVDISGNGMGDMGAKMLAK), and 658–682 (LQKIENYLLRNHETRKYLQEQAYRL). Positions 714–738 (GDAIQEDLKAAERLMRDAKNSKTLL) form a coiled coil. At Thr920 the chain carries Phosphothreonine. Disordered stretches follow at residues 961–982 (PFPSVRQEKRSSGLISELPSEE) and 1040–1374 (KMDC…FIFV). The stretch at 962 to 985 (FPSVRQEKRSSGLISELPSEEGRR) is one LRR 11 repeat. Residues 962-1084 (FPSVRQEKRS…LIKSRSRSER (123 aa)) are inhibits capping activity of CP. The residue at position 972 (Ser972) is a Phosphoserine. Residues 1040 to 1064 (KMDCKRSSSRSSDAHELGEGDEKKK) show a composition bias toward basic and acidic residues. Residues 1058–1092 (EGDEKKKRDSRRSGFLNLIKSRSRSERPPTVLMTE) are necessary for localization at the cell membrane. Position 1096 is a phosphoserine (Ser1096). Composition is skewed to basic and acidic residues over residues 1108–1132 (TTRKEIKAAEHNGAPDRTEEIKTPE) and 1141–1150 (EAGRAERSDS). Residues 1191-1204 (VISQDPSSPVSCNT) show a composition bias toward polar residues. Position 1229 is a phosphothreonine (Thr1229). The segment covering 1232-1244 (KNAKAEPRVDGGC) has biased composition (basic and acidic residues). Residues 1245–1263 (RSRSSSSMPTSPKPLLQSP) are compositionally biased toward low complexity. 7 positions are modified to phosphoserine: Ser1281, Ser1289, Ser1291, Ser1295, Ser1319, Ser1328, and Ser1335. The segment covering 1317–1330 (QNSSQSSPRSFSQE) has biased composition (low complexity). The segment covering 1343–1356 (QEQKQRSSGKDGHQ) has biased composition (basic and acidic residues). Ser1363 carries the post-translational modification Phosphoserine.

It belongs to the CARMIL family. Homodimer. Interacts (via C-terminus) with heterodimeric capping protein (CP); this interaction uncaps barbed ends capped by CP, enhances barbed-end actin polymerization and promotes lamellipodial formation and cell migration. Interacts with MYO1E. Interacts with TRIO.

The protein resides in the cytoplasm. Its subcellular location is the cytoskeleton. It is found in the cell membrane. The protein localises to the cell projection. It localises to the lamellipodium. Cell membrane-cytoskeleton-associated protein that plays a role in the regulation of actin polymerization at the barbed end of actin filaments. Prevents F-actin heterodimeric capping protein (CP) activity at the leading edges of migrating cells, and hence generates uncapped barbed ends and enhances actin polymerization, however, seems unable to nucleate filaments. Plays a role in lamellipodial protrusion formations and cell migration. The polypeptide is F-actin-uncapping protein LRRC16A (Mus musculus (Mouse)).